Consider the following 386-residue polypeptide: Chaperone protein DnaJ (386 aa).

One can recognise a J domain in the interval 6–70 (DYYEVLGVDK…QKRAAYDQYG (65 aa)). A CR-type zinc finger spans residues 141–223 (GKDTEVSYKR…CHGTGHEKKT (83 aa)). Residues C154, C157, C171, C174, C197, C200, C211, and C214 each coordinate Zn(2+). CXXCXGXG motif repeat units lie at residues 154-161 (CHTCGGNG), 171-178 (CHKCKGSG), 197-204 (CDVCHGTG), and 211-218 (CETCHGTG). Residues 363-386 (LTGQSTEEQQSEGFFDKMKDAFKK) form a disordered region. Residues 364-374 (TGQSTEEQQSE) are compositionally biased toward polar residues. Residues 376-386 (FFDKMKDAFKK) are compositionally biased toward basic and acidic residues.

This sequence belongs to the DnaJ family. Homodimer. Zn(2+) is required as a cofactor.

Its subcellular location is the cytoplasm. In terms of biological role, participates actively in the response to hyperosmotic and heat shock by preventing the aggregation of stress-denatured proteins and by disaggregating proteins, also in an autonomous, DnaK-independent fashion. Unfolded proteins bind initially to DnaJ; upon interaction with the DnaJ-bound protein, DnaK hydrolyzes its bound ATP, resulting in the formation of a stable complex. GrpE releases ADP from DnaK; ATP binding to DnaK triggers the release of the substrate protein, thus completing the reaction cycle. Several rounds of ATP-dependent interactions between DnaJ, DnaK and GrpE are required for fully efficient folding. Also involved, together with DnaK and GrpE, in the DNA replication of plasmids through activation of initiation proteins. This chain is Chaperone protein DnaJ, found in Tetragenococcus halophilus (Pediococcus halophilus).